The sequence spans 444 residues: Protein translocase subunit SecY (444 aa).

The next 10 membrane-spanning stretches (helical) occupy residues 24–44, 77–97, 123–143, 153–173, 181–201, 215–235, 269–289, 318–338, 376–396, and 400–420; these read FFVI…IPGI, ILAL…LLTV, GTLV…PNMV, MFTL…MWLG, IGNG…PKAI, VLLL…VVFM, MAGV…GTLA, YVML…ALVF, LAGA…MVAW, and FYFG…FMAQ.

The protein belongs to the SecY/SEC61-alpha family. As to quaternary structure, component of the Sec protein translocase complex. Heterotrimer consisting of SecY, SecE and SecG subunits. The heterotrimers can form oligomers, although 1 heterotrimer is thought to be able to translocate proteins. Interacts with the ribosome. Interacts with SecDF, and other proteins may be involved. Interacts with SecA.

Its subcellular location is the cell inner membrane. Functionally, the central subunit of the protein translocation channel SecYEG. Consists of two halves formed by TMs 1-5 and 6-10. These two domains form a lateral gate at the front which open onto the bilayer between TMs 2 and 7, and are clamped together by SecE at the back. The channel is closed by both a pore ring composed of hydrophobic SecY resides and a short helix (helix 2A) on the extracellular side of the membrane which forms a plug. The plug probably moves laterally to allow the channel to open. The ring and the pore may move independently. This Vibrio cholerae serotype O1 (strain ATCC 39315 / El Tor Inaba N16961) protein is Protein translocase subunit SecY.